We begin with the raw amino-acid sequence, 445 residues long: Tubby-like F-box protein 14 (445 aa).

The F-box domain occupies 56-114; sequence SSCWANLPPELLRDVIERLEASEAAWPSRKNVVACAAVCRTWRDMCREIVKNPEFCGKI.

The protein belongs to the TUB family. Ubiquitous.

The polypeptide is Tubby-like F-box protein 14 (TULP14) (Oryza sativa subsp. japonica (Rice)).